The chain runs to 602 residues: Sodium- and chloride-dependent GABA transporter 2 (602 aa).

Over Met1–Glu40 the chain is Cytoplasmic. 3 consecutive transmembrane segments (helical) span residues Phe41 to Leu61, Gly68 to Leu88, and Ile121 to Phe141. Over Ser142 to Trp206 the chain is Extracellular. Cys153 and Cys162 are joined by a disulfide. N-linked (GlcNAc...) asparagine glycans are attached at residues Asn169, Asn173, and Asn178. 2 helical membrane passes run Glu207 to Val227 and Val233 to Val253. A glycan (N-linked (GlcNAc...) asparagine) is linked at Asn269. Helical transmembrane passes span Ala282–Ser302, Ile319–Met339, Val366–Leu386, Ile418–Gly438, Gly453–Ala473, Pro490–Phe510, and Trp528–Trp548. The Cytoplasmic portion of the chain corresponds to Ser549 to Cys602. Thr587 carries the post-translational modification Phosphothreonine. Phosphoserine is present on Ser591.

Belongs to the sodium:neurotransmitter symporter (SNF) (TC 2.A.22) family. SLC6A13 subfamily. As to expression, brain, retina, and peripheral tissues. Expressed in hepatocytes (at protein level).

It is found in the cell membrane. The protein localises to the basolateral cell membrane. The enzyme catalyses 4-aminobutanoate(out) + chloride(out) + 2 Na(+)(out) = 4-aminobutanoate(in) + chloride(in) + 2 Na(+)(in). The catalysed reaction is taurine(out) + chloride(out) + 2 Na(+)(out) = taurine(in) + chloride(in) + 2 Na(+)(in). It carries out the reaction beta-alanine(out) + chloride(out) + 2 Na(+)(out) = beta-alanine(in) + chloride(in) + 2 Na(+)(in). It catalyses the reaction hypotaurine(out) + chloride(out) + 2 Na(+)(out) = hypotaurine(in) + chloride(in) + 2 Na(+)(in). With respect to regulation, GABA transport is inhibited by beta-alanine, L-2,4-Diaminobutyric acid, hypotaurine and nipecotic acid. Taurine transport is inhibited by hypotaurine, beta-alanine and nipecotic acid. Mediates sodium- and chloride-dependent transport of gamma-aminobutyric acid (GABA). Mediates transport of taurine and is the major taurine transporter in hepatocytes. Can also mediate transport of beta-alanine and hypotaurine. The chain is Sodium- and chloride-dependent GABA transporter 2 (Slc6a13) from Rattus norvegicus (Rat).